We begin with the raw amino-acid sequence, 395 residues long: MGKEKFDRSKPHVNVGTIGHVDHGKTTLTAAISAVLAKSQGKAATKFDQIDGAPEERERGITIATAHIEYETDKRHYAHVDCPGHADYVKNMITGAAQMDGAILVVSATDGPMPQTREHILLSRQVGVPFIVVFMNKVDMVDDEELLELVEMEIRELLSEYDFPGDDLPVIQGSALGALNGEAKWEEKIMELMNAVDEYIPEPTRDTEKDFMMPVEDVFSITGRGTVATGRVERGVLKVNDEVEIVGLHEETKKSVCTGVEMFRKLLDYAEAGDNIGALLRGVSRDDIERGQVLAKPNTITPHKTFKAQVYILSKEEGGRHTPFFGNYRPQFYFRTTDVTGMCQLPEGTEMVMPGDNIELTVELIAPIALEKETRFSIREGGRTVGAGSVTEIVE.

The 195-residue stretch at 10 to 204 (KPHVNVGTIG…AVDEYIPEPT (195 aa)) folds into the tr-type G domain. The interval 19–26 (GHVDHGKT) is G1. Position 19–26 (19–26 (GHVDHGKT)) interacts with GTP. Threonine 26 lines the Mg(2+) pocket. A G2 region spans residues 60 to 64 (GITIA). The G3 stretch occupies residues 81–84 (DCPG). Residues 81-85 (DCPGH) and 136-139 (NKVD) contribute to the GTP site. Positions 136 to 139 (NKVD) are G4. The segment at 174–176 (SAL) is G5.

The protein belongs to the TRAFAC class translation factor GTPase superfamily. Classic translation factor GTPase family. EF-Tu/EF-1A subfamily. Monomer.

Its subcellular location is the cytoplasm. The enzyme catalyses GTP + H2O = GDP + phosphate + H(+). GTP hydrolase that promotes the GTP-dependent binding of aminoacyl-tRNA to the A-site of ribosomes during protein biosynthesis. The sequence is that of Elongation factor Tu from Exiguobacterium sibiricum (strain DSM 17290 / CCUG 55495 / CIP 109462 / JCM 13490 / 255-15).